The primary structure comprises 1170 residues: Protein SCAR4 (1170 aa).

Disordered stretches follow at residues 180-207 (KLGK…EDSR), 356-376 (NDAD…SDDK), 631-674 (AAPK…PRDL), 701-742 (SYSG…NQTG), 783-819 (NQRQ…SSPL), 960-980 (EESK…SDTY), and 1026-1046 (HNNP…HPLE). Residues 183 to 195 (KDKRLRQSKKKGS) show a composition bias toward basic residues. The span at 198–207 (TIKETPEDSR) shows a compositional bias: basic and acidic residues. The segment covering 356-365 (NDADSPASTE) has biased composition (polar residues). The span at 366–376 (SEVKEAGSDDK) shows a compositional bias: basic and acidic residues. 4 stretches are compositionally biased toward polar residues: residues 640-668 (SQDG…TLMS), 701-716 (SYSG…IVSD), 783-818 (NQRQ…QSSP), and 967-980 (EQSP…SDTY). Residues 1105-1123 (ENDSLLEIIRSKSFNLRPA) form the WH2 domain.

This sequence belongs to the SCAR/WAVE family. Interacts with SPK1. Expressed in expanding cotyledons, expanding leaves and expanding siliques containing developing embryos. Detected in unopened flower buds and in the expanding tip region of roots. Reduced expression in mature leaves.

The protein resides in the cytoplasm. The protein localises to the cytoskeleton. Its function is as follows. Involved in regulation of actin and microtubule organization. Part of a WAVE complex that activates the Arp2/3 complex. Regulates trichome branch positioning and expansion. The sequence is that of Protein SCAR4 (SCAR4) from Arabidopsis thaliana (Mouse-ear cress).